Here is a 323-residue protein sequence, read N- to C-terminus: 1-aminocyclopropane-1-carboxylate oxidase 4 (323 aa).

Residue M1 is modified to N-acetylmethionine. The Fe2OG dioxygenase domain maps to 153-254 (PTFGTKVSNY…RMSIASFYNP (102 aa)). Fe cation contacts are provided by H177, D179, and H234. R245 lines the 2-oxoglutarate pocket.

Belongs to the iron/ascorbate-dependent oxidoreductase family. The cofactor is Fe cation. In terms of tissue distribution, expressed in vegetative tissues. Expressed constitutively at a low level in leaves and blades.

The enzyme catalyses 1-aminocyclopropane-1-carboxylate + L-ascorbate + O2 = ethene + L-dehydroascorbate + hydrogen cyanide + CO2 + 2 H2O. It participates in alkene biosynthesis; ethylene biosynthesis via S-adenosyl-L-methionine; ethylene from S-adenosyl-L-methionine: step 2/2. Functionally, enzyme involved in the ethylene biosynthesis. May promote stem elongation by maximizing the extensibility cells, possibly by activating ethylene biosynthesis, in response to very-long-chain fatty acids (VLCFAs C20:0 to C30:0). The chain is 1-aminocyclopropane-1-carboxylate oxidase 4 (ACO4) from Arabidopsis thaliana (Mouse-ear cress).